We begin with the raw amino-acid sequence, 62 residues long: UPF0339 protein Atu0232 (62 aa).

It belongs to the UPF0339 family.

The sequence is that of UPF0339 protein Atu0232 from Agrobacterium fabrum (strain C58 / ATCC 33970) (Agrobacterium tumefaciens (strain C58)).